The chain runs to 62 residues: Photosystem II reaction center protein Z (62 aa).

The next 2 membrane-spanning stretches (helical) occupy residues 8–28 and 41–61; these read AVFA…VVFA and FSGT…NSLI.

This sequence belongs to the PsbZ family. In terms of assembly, PSII is composed of 1 copy each of membrane proteins PsbA, PsbB, PsbC, PsbD, PsbE, PsbF, PsbH, PsbI, PsbJ, PsbK, PsbL, PsbM, PsbT, PsbY, PsbZ, Psb30/Ycf12, at least 3 peripheral proteins of the oxygen-evolving complex and a large number of cofactors. It forms dimeric complexes.

It is found in the plastid. It localises to the chloroplast thylakoid membrane. Its function is as follows. May control the interaction of photosystem II (PSII) cores with the light-harvesting antenna, regulates electron flow through the 2 photosystem reaction centers. PSII is a light-driven water plastoquinone oxidoreductase, using light energy to abstract electrons from H(2)O, generating a proton gradient subsequently used for ATP formation. This is Photosystem II reaction center protein Z from Phalaenopsis aphrodite subsp. formosana (Moth orchid).